A 273-amino-acid polypeptide reads, in one-letter code: HTH-type transcriptional activator RhaS (273 aa).

Positions 174-272 constitute an HTH araC/xylS-type domain; sequence YQLLDWLQNN…SQSPRDLRSQ (99 aa). DNA-binding regions (H-T-H motif) lie at residues 191-212 and 239-262; these read PELADRFALPLRTLHRQLKNKT and VTDIAYLCGFGDSNHFSTLFKREF.

Binds DNA as a dimer.

It localises to the cytoplasm. Its function is as follows. Activates expression of the rhaBAD and rhaT operons. In Yersinia pestis bv. Antiqua (strain Angola), this protein is HTH-type transcriptional activator RhaS.